The chain runs to 325 residues: Serpentine receptor class delta-59 (325 aa).

Transmembrane regions (helical) follow at residues 14–34 (WYWP…LHLI), 45–65 (LKIF…FAFL), 75–95 (ISAA…TCFI), 97–117 (YHVF…TVLF), 132–152 (TYIM…IPFT), 190–210 (FLSA…GCLI), 235–255 (TLIH…IPSF), and 275–295 (ILVS…YFIV).

Belongs to the nematode receptor-like protein srd family.

The protein localises to the membrane. The protein is Serpentine receptor class delta-59 (srd-59) of Caenorhabditis elegans.